A 141-amino-acid chain; its full sequence is Cholinesterase (141 aa).

N39 carries N-linked (GlcNAc...) asparagine glycosylation. Residue 49–50 (GG) coordinates substrate. S131 functions as the Acyl-ester intermediate in the catalytic mechanism. S131 is subject to Phosphoserine.

Belongs to the type-B carboxylesterase/lipase family. In terms of assembly, homotetramer; disulfide-linked. Dimer of dimers. Present in most cells except erythrocytes.

Its subcellular location is the secreted. It catalyses the reaction an acylcholine + H2O = a carboxylate + choline + H(+). Functionally, esterase with broad substrate specificity. Contributes to the inactivation of the neurotransmitter acetylcholine. Can degrade neurotoxic organophosphate esters. This Macaca mulatta (Rhesus macaque) protein is Cholinesterase (BCHE).